A 166-amino-acid chain; its full sequence is Large ribosomal subunit protein bL9 (166 aa).

Belongs to the bacterial ribosomal protein bL9 family.

Its function is as follows. Binds to the 23S rRNA. The chain is Large ribosomal subunit protein bL9 from Brachyspira hyodysenteriae (strain ATCC 49526 / WA1).